Reading from the N-terminus, the 198-residue chain is SCO2-like protein RF_0043 (198 aa).

This sequence belongs to the SCO1/2 family.

This chain is SCO2-like protein RF_0043, found in Rickettsia felis (strain ATCC VR-1525 / URRWXCal2) (Rickettsia azadi).